We begin with the raw amino-acid sequence, 292 residues long: Undecaprenyl-diphosphatase 2 (292 aa).

The next 5 membrane-spanning stretches (helical) occupy residues 89–109, 118–138, 203–223, 232–252, and 263–283; these read WLVI…QDAI, LIAT…WYAS, FLLA…SIGG, PTIL…AWFL, and FVLY…GGAL.

The protein belongs to the UppP family.

Its subcellular location is the cell membrane. It catalyses the reaction di-trans,octa-cis-undecaprenyl diphosphate + H2O = di-trans,octa-cis-undecaprenyl phosphate + phosphate + H(+). Catalyzes the dephosphorylation of undecaprenyl diphosphate (UPP). Confers resistance to bacitracin. This Frankia casuarinae (strain DSM 45818 / CECT 9043 / HFP020203 / CcI3) protein is Undecaprenyl-diphosphatase 2.